We begin with the raw amino-acid sequence, 210 residues long: MTSNLKRNFEYLVQYIQPHLRPKSSHSISLGYLSKEKISQEEMQIIRATQKLARTKYMTLYCIPRAWLIPFHEFLNNRSYRFPKLDYSQTPIRLAIRSGKKSVHKSAVVRHHNTTRIRETFIDIIKALYVNEKHHYLPKQAIDVVIDSYNGGCVNLPPETLFYDMQRLWLTAMNTYENQKPPNLKLLLHDHGTVVSLGSDNVPLYRKLDS.

Its subcellular location is the mitochondrion. This is an uncharacterized protein from Schizosaccharomyces pombe (strain 972 / ATCC 24843) (Fission yeast).